The primary structure comprises 510 residues: Ribonuclease Y (510 aa).

Residues 2–22 (IYIIFSSIFAGFILGFLVRVF) traverse the membrane as a helical segment. One can recognise a KH domain in the interval 198-258 (TVASVELPND…IRKELAKRTL (61 aa)). One can recognise an HD domain in the interval 324–419 (VLSHSKETAI…VQIADAISAS (96 aa)).

It belongs to the RNase Y family.

The protein localises to the cell membrane. In terms of biological role, endoribonuclease that initiates mRNA decay. This is Ribonuclease Y from Borrelia garinii subsp. bavariensis (strain ATCC BAA-2496 / DSM 23469 / PBi) (Borreliella bavariensis).